The sequence spans 354 residues: Chorismate synthase (354 aa).

Position 46 (arginine 46) interacts with NADP(+). Residues 123-125 (RVS), 233-234 (NG), glycine 273, 288-292 (KPTPS), and arginine 314 each bind FMN.

The protein belongs to the chorismate synthase family. In terms of assembly, homotetramer. The cofactor is FMNH2.

The enzyme catalyses 5-O-(1-carboxyvinyl)-3-phosphoshikimate = chorismate + phosphate. It participates in metabolic intermediate biosynthesis; chorismate biosynthesis; chorismate from D-erythrose 4-phosphate and phosphoenolpyruvate: step 7/7. Catalyzes the anti-1,4-elimination of the C-3 phosphate and the C-6 proR hydrogen from 5-enolpyruvylshikimate-3-phosphate (EPSP) to yield chorismate, which is the branch point compound that serves as the starting substrate for the three terminal pathways of aromatic amino acid biosynthesis. This reaction introduces a second double bond into the aromatic ring system. In Campylobacter curvus (strain 525.92), this protein is Chorismate synthase.